A 320-amino-acid polypeptide reads, in one-letter code: Malate dehydrogenase (320 aa).

NAD(+) is bound by residues 10-15 (GAGQIG) and Asp34. Arg83 and Arg89 together coordinate substrate. NAD(+)-binding positions include Asn96 and 119 to 121 (ITN). Residues Asn121 and Arg152 each contribute to the substrate site. His176 serves as the catalytic Proton acceptor.

It belongs to the LDH/MDH superfamily. MDH type 3 family.

It catalyses the reaction (S)-malate + NAD(+) = oxaloacetate + NADH + H(+). Catalyzes the reversible oxidation of malate to oxaloacetate. In Roseobacter denitrificans (strain ATCC 33942 / OCh 114) (Erythrobacter sp. (strain OCh 114)), this protein is Malate dehydrogenase.